Reading from the N-terminus, the 223-residue chain is MTGDRELQALLRLTAWLSPAFPIGGFAYSGGLERATADGLVIDAASLAAWIATLISHGSVWNDAVLLAESHRQQPSPAFLAEITALAEALAGSRERHQETMLLGDAFVAAARAWPDEVFERLPGKTAYPVAVGAVAGAHGIGLEKVLVAFLHAYASQAVSSGIRLGVAGQRDGVAVLAGLEEHIVEVARRAAASTLDELGSATVQADIASLRHETQTTRLFRS.

Belongs to the UreF family. As to quaternary structure, ureD, UreF and UreG form a complex that acts as a GTP-hydrolysis-dependent molecular chaperone, activating the urease apoprotein by helping to assemble the nickel containing metallocenter of UreC. The UreE protein probably delivers the nickel.

The protein localises to the cytoplasm. Functionally, required for maturation of urease via the functional incorporation of the urease nickel metallocenter. The sequence is that of Urease accessory protein UreF from Rhizobium etli (strain CIAT 652).